We begin with the raw amino-acid sequence, 660 residues long: UvrABC system protein C (660 aa).

The GIY-YIG domain maps to 16 to 95; that stretch reads ESPGVYRFRD…IKQYDPRFNV (80 aa). A UVR domain is found at 208-243; it reads DAMVRRLEREMAEASAELEFERAARLRDDLAALRRA. Residues 469-501 are disordered; sequence GEAGVESAGDPDAPAGPDAPDEPRVGTLVDPTT. The segment covering 476–486 has biased composition (low complexity); the sequence is AGDPDAPAGPD.

It belongs to the UvrC family. As to quaternary structure, interacts with UvrB in an incision complex.

The protein localises to the cytoplasm. In terms of biological role, the UvrABC repair system catalyzes the recognition and processing of DNA lesions. UvrC both incises the 5' and 3' sides of the lesion. The N-terminal half is responsible for the 3' incision and the C-terminal half is responsible for the 5' incision. This is UvrABC system protein C from Salinispora arenicola (strain CNS-205).